We begin with the raw amino-acid sequence, 543 residues long: MAEFNIDELLKNVLEDPSTEISEETLKQLYQKTNPYKQFKNDSRVAFCSFTNLREQYIRRLIMTSFIGYVFKALQEWMPSYSKPTHTTKTLLSELITLVDTLKQETNDVPSESVVNTLLSIADNCKTQTQKSTEAKTTIDSFLREHFVFDPNLHAQSAYTCASTCASTCASTCASTCADTNVDTCTDTCASTCADTNVDTCASTCADTCASTEYTDLMDPERIPLHIMQKTLNVPNELQADIDAITQTRQGYRAAAHILQNIELHQSIKHMLENPKAFKPILFNTKITRYLSQHIPPQDTFYKWNYYIEDNYEELRAATESIYPEKPDLEFAFIIYDVVDSSSNQQKIDEFYYKYKDQIFSEVSSIQLGNWTLLGSFKANRERYNYFNQNNEIIKRILDRHEEDLKIGKEILRNTIYHKKAKNIQETGPDAPGLSIYNSTFHTDSGIKGLLSFKELKNLEKASGNIKKAREYDFIDDCEEKIKQLLSKENLTPDEKSQLEKTKKQLENALEMLNVPDDTIRVDMWVNNNNKLEKEILYTKAEL.

13 repeat units span residues Cys-161 to Thr-164, Cys-165 to Thr-168, Cys-169 to Thr-172, Cys-173 to Thr-176, Cys-177 to Thr-180, Asn-181 to Thr-184, Cys-185 to Thr-188, Cys-189 to Thr-192, Cys-193 to Thr-196, Asn-197 to Thr-200, Cys-201 to Thr-204, Cys-205 to Thr-208, and Cys-209 to Thr-212. The interval Cys-161–Thr-212 is 13 X 4 AA tandem repeats of [CN]-[ATV]-[DS]-T.

This sequence belongs to the asfivirus B602L family.

The protein localises to the host cytoplasm. Plays an essential role in the assembly of the icosahedral capsid of the virus. Allows the assembly of 3 molecules of hexon protein p72 and formation of a thermostable trimer. The chain is Protein B602L from African swine fever virus (isolate Pig/Kenya/KEN-50/1950) (ASFV).